A 170-amino-acid polypeptide reads, in one-letter code: Large ribosomal subunit protein bL17 (170 aa).

Residues 134–144 are compositionally biased toward low complexity; the sequence is ASAKAAQAQEK. The disordered stretch occupies residues 134–170; it reads ASAKAAQAQEKPAQEEEVEATSDEVAYTSEPDKAAEH.

It belongs to the bacterial ribosomal protein bL17 family. As to quaternary structure, part of the 50S ribosomal subunit. Contacts protein L32.

The chain is Large ribosomal subunit protein bL17 from Mycobacterium leprae (strain Br4923).